The primary structure comprises 173 residues: MGKIIFYEDRNFQGRHYECSSDCADLSPYFSRCNSIRVESDWWVLYEKPNYMGYQYVLTRGEYPDYQRWMGFNDCVRSCRMLPHTGRSYRMRIYERLTFGGQMMEIMDDCPSVYDRFRYRDIHSCQVMDGYWIFYEHPNYRGRQYFMRPGEYRRYSDWGGYSSTVGSLRRIME.

Beta/gamma crystallin 'Greek key' domains are found at residues 2–40 and 41–83; these read GKII…RVES and DWWV…RMLP. The segment at 84–88 is connecting peptide; the sequence is HTGRS. Beta/gamma crystallin 'Greek key' domains are found at residues 89–129 and 130–172; these read YRMR…QVMD and GYWI…RRIM.

This sequence belongs to the beta/gamma-crystallin family.

Its function is as follows. Crystallins are the dominant structural components of the vertebrate eye lens. The protein is Gamma-crystallin S-1 (GS-1) of Chiloscyllium indicum (Slender bamboo shark).